The sequence spans 110 residues: Cuticle protein 13 (110 aa).

This is Cuticle protein 13 from Limulus polyphemus (Atlantic horseshoe crab).